A 128-amino-acid polypeptide reads, in one-letter code: uncharacterized protein (128 aa).

The next 2 membrane-spanning stretches (helical) occupy residues 52–72 (LLVI…GIFL) and 91–111 (LFVA…VMLI).

Its subcellular location is the cell membrane. This is an uncharacterized protein from Mycoplasma pneumoniae (strain ATCC 29342 / M129 / Subtype 1) (Mycoplasmoides pneumoniae).